Here is a 377-residue protein sequence, read N- to C-terminus: Protein ECM9 (377 aa).

Its function is as follows. May be involved in cell wall organization and biogenesis. This Saccharomyces cerevisiae (strain ATCC 204508 / S288c) (Baker's yeast) protein is Protein ECM9 (ECM9).